The sequence spans 532 residues: Protoporphyrinogen oxidase (532 aa).

FAD contacts are provided by residues G9–G14, I289, and V511–I513.

This sequence belongs to the protoporphyrinogen/coproporphyrinogen oxidase family. Protoporphyrinogen oxidase subfamily. Requires FAD as cofactor.

It localises to the mitochondrion. It catalyses the reaction protoporphyrinogen IX + 3 O2 = protoporphyrin IX + 3 H2O2. The protein operates within porphyrin-containing compound metabolism; protoporphyrin-IX biosynthesis; protoporphyrin-IX from protoporphyrinogen-IX: step 1/1. Catalyzes the 6-electron oxidation of protoporphyrinogen-IX to form protoporphyrin-IX. The polypeptide is Protoporphyrinogen oxidase (ppox) (Dictyostelium discoideum (Social amoeba)).